Here is a 104-residue protein sequence, read N- to C-terminus: Pyrimidine/purine nucleoside phosphorylase (104 aa).

The protein belongs to the nucleoside phosphorylase PpnP family.

The enzyme catalyses a purine D-ribonucleoside + phosphate = a purine nucleobase + alpha-D-ribose 1-phosphate. It catalyses the reaction adenosine + phosphate = alpha-D-ribose 1-phosphate + adenine. It carries out the reaction cytidine + phosphate = cytosine + alpha-D-ribose 1-phosphate. The catalysed reaction is guanosine + phosphate = alpha-D-ribose 1-phosphate + guanine. The enzyme catalyses inosine + phosphate = alpha-D-ribose 1-phosphate + hypoxanthine. It catalyses the reaction thymidine + phosphate = 2-deoxy-alpha-D-ribose 1-phosphate + thymine. It carries out the reaction uridine + phosphate = alpha-D-ribose 1-phosphate + uracil. The catalysed reaction is xanthosine + phosphate = alpha-D-ribose 1-phosphate + xanthine. Its function is as follows. Catalyzes the phosphorolysis of diverse nucleosides, yielding D-ribose 1-phosphate and the respective free bases. Can use uridine, adenosine, guanosine, cytidine, thymidine, inosine and xanthosine as substrates. Also catalyzes the reverse reactions. This is Pyrimidine/purine nucleoside phosphorylase from Thiobacillus denitrificans (strain ATCC 25259 / T1).